Consider the following 313-residue polypeptide: Probable cell division protein WhiA (313 aa).

The H-T-H motif DNA-binding region spans 276–309 (SLKELGEMLHPKLGKSGVNHRLRKLDEIAERIRK).

It belongs to the WhiA family.

Its function is as follows. Involved in cell division and chromosome segregation. The polypeptide is Probable cell division protein WhiA (Ruminiclostridium cellulolyticum (strain ATCC 35319 / DSM 5812 / JCM 6584 / H10) (Clostridium cellulolyticum)).